We begin with the raw amino-acid sequence, 546 residues long: CTP synthase (546 aa).

The amidoligase domain stretch occupies residues 1 to 267; the sequence is MSKFVFVTGG…AQQTLELLNL (267 aa). Position 13 (serine 13) interacts with CTP. UTP is bound at residue serine 13. ATP contacts are provided by residues 14–19 and aspartate 71; that span reads SIGKGI. Mg(2+) contacts are provided by aspartate 71 and glutamate 141. CTP contacts are provided by residues 148–150, 188–193, and lysine 224; these read DIE and KTKPTQ. UTP is bound by residues 188-193 and lysine 224; that span reads KTKPTQ. One can recognise a Glutamine amidotransferase type-1 domain in the interval 292-534; sequence EIAIVGKYVQ…MKAALKGREE (243 aa). Glycine 354 serves as a coordination point for L-glutamine. Residue cysteine 381 is the Nucleophile; for glutamine hydrolysis of the active site. L-glutamine contacts are provided by residues 382 to 385, glutamate 405, and arginine 462; that span reads LGMQ. Active-site residues include histidine 507 and glutamate 509.

The protein belongs to the CTP synthase family. As to quaternary structure, homotetramer.

The catalysed reaction is UTP + L-glutamine + ATP + H2O = CTP + L-glutamate + ADP + phosphate + 2 H(+). It catalyses the reaction L-glutamine + H2O = L-glutamate + NH4(+). The enzyme catalyses UTP + NH4(+) + ATP = CTP + ADP + phosphate + 2 H(+). Its pathway is pyrimidine metabolism; CTP biosynthesis via de novo pathway; CTP from UDP: step 2/2. With respect to regulation, allosterically activated by GTP, when glutamine is the substrate; GTP has no effect on the reaction when ammonia is the substrate. The allosteric effector GTP functions by stabilizing the protein conformation that binds the tetrahedral intermediate(s) formed during glutamine hydrolysis. Inhibited by the product CTP, via allosteric rather than competitive inhibition. Functionally, catalyzes the ATP-dependent amination of UTP to CTP with either L-glutamine or ammonia as the source of nitrogen. Regulates intracellular CTP levels through interactions with the four ribonucleotide triphosphates. This is CTP synthase from Microcystis aeruginosa (strain NIES-843 / IAM M-2473).